Consider the following 552-residue polypeptide: Hydroxylamine reductase (552 aa).

[2Fe-2S] cluster-binding residues include C5, C8, C20, and C27. Hybrid [4Fe-2O-2S] cluster-binding residues include H251, E275, C319, C407, C435, C460, E494, and K496. Residue C407 is modified to Cysteine persulfide.

This sequence belongs to the HCP family. Requires [2Fe-2S] cluster as cofactor. It depends on hybrid [4Fe-2O-2S] cluster as a cofactor.

Its subcellular location is the cytoplasm. It catalyses the reaction A + NH4(+) + H2O = hydroxylamine + AH2 + H(+). Functionally, catalyzes the reduction of hydroxylamine to form NH(3) and H(2)O. This chain is Hydroxylamine reductase, found in Escherichia coli (strain UTI89 / UPEC).